The primary structure comprises 435 residues: MKATAERIEKNTVLLEIEVEQERVDQALNQAYKKVVKQVNVPGFRKGKAPRKMVERFVGTETLFGEAVEIIIPDAYMEALKETATEPIDQPKIDIVQGEAGKALIFKATVEVKPEVTLGEYKGLEVTKASSEVTDEDVEKELARLQDRHAKLVTLEEGEIKKDDITLIDFTGYVDGEAFEGGHAENYSLTVGSGTFIPGFEEQLLGVKLGEEKEVNVTFPEEYHAENLAGKPATFKVKINEIKRKELASLDDEFAKDVSEFDTLDELKSDIRKKLMEVAERTAKSSVENGAVEAAVEKATVEIPQAMISQKVEEMLNSMGQRLAQQGINLDQYFQYTNTSMDDMRQRMRPDAEKNVKNELVLDAIAKVENITATAEETNEEIQKIAEYVKQDAEIVRKTLELQGELGHINQDIARRKVVQFLVENAKVVEGTKED.

A PPIase FKBP-type domain is found at 163-248 (DDITLIDFTG…INEIKRKELA (86 aa)).

The protein belongs to the FKBP-type PPIase family. Tig subfamily.

It is found in the cytoplasm. It catalyses the reaction [protein]-peptidylproline (omega=180) = [protein]-peptidylproline (omega=0). Its function is as follows. Involved in protein export. Acts as a chaperone by maintaining the newly synthesized protein in an open conformation. Functions as a peptidyl-prolyl cis-trans isomerase. In Desulforamulus reducens (strain ATCC BAA-1160 / DSM 100696 / MI-1) (Desulfotomaculum reducens), this protein is Trigger factor.